Consider the following 473-residue polypeptide: Glutamate--tRNA ligase 1 (473 aa).

The 'HIGH' region signature appears at 11–21 (PSPTGYLHIGG). The span at 113–133 (KARAEGRPPRYDGRWRDRDPS) shows a compositional bias: basic and acidic residues. The disordered stretch occupies residues 113–136 (KARAEGRPPRYDGRWRDRDPSEAP). Residues 240 to 244 (KLSKR) carry the 'KMSKS' region motif. Lys243 contributes to the ATP binding site.

The protein belongs to the class-I aminoacyl-tRNA synthetase family. Glutamate--tRNA ligase type 1 subfamily. In terms of assembly, monomer.

It is found in the cytoplasm. The catalysed reaction is tRNA(Glu) + L-glutamate + ATP = L-glutamyl-tRNA(Glu) + AMP + diphosphate. Catalyzes the attachment of glutamate to tRNA(Glu) in a two-step reaction: glutamate is first activated by ATP to form Glu-AMP and then transferred to the acceptor end of tRNA(Glu). This chain is Glutamate--tRNA ligase 1, found in Brucella melitensis biotype 1 (strain ATCC 23456 / CCUG 17765 / NCTC 10094 / 16M).